The chain runs to 91 residues: Small ribosomal subunit protein bS18 (91 aa).

Residues 1 to 14 (MTNQNQSQTQTTQT) are compositionally biased toward low complexity. The tract at residues 1–24 (MTNQNQSQTQTTQTVEKVSSRQKK) is disordered.

The protein belongs to the bacterial ribosomal protein bS18 family. As to quaternary structure, part of the 30S ribosomal subunit. Forms a tight heterodimer with protein bS6.

Functionally, binds as a heterodimer with protein bS6 to the central domain of the 16S rRNA, where it helps stabilize the platform of the 30S subunit. This is Small ribosomal subunit protein bS18 from Caldicellulosiruptor saccharolyticus (strain ATCC 43494 / DSM 8903 / Tp8T 6331).